The following is a 961-amino-acid chain: Transcription factor MYB3R-4 (961 aa).

The tract at residues Met1–Thr33 is disordered. HTH myb-type domains lie at Ala24–Leu75, Asn76–Ile131, and Asn132–Leu182. DNA-binding regions (H-T-H motif) lie at residues Trp52 to Leu75, Trp104 to Leu127, and Trp155 to Val178. 2 disordered regions span residues Gly390–Ser457 and Arg534–Gly555. 2 stretches are compositionally biased toward polar residues: residues His391–Asn405 and Ser416–Pro430. Residues Thr431–Ser444 are compositionally biased toward low complexity. A compositionally biased stretch (basic and acidic residues) spans Arg534 to Met554. The Nuclear localization signal motif lies at Gly612–Ala619. The disordered stretch occupies residues Asn756–Arg781. Polar residues predominate over residues Thr764 to Arg781.

Component of a DREAM-like complex which modulates a variety of developmentally regulated genes and of the mitotic genes in proliferating and differentiated cells. Associates with CDKA-1, RBR1 and E2FB, but not with E2FC, in proliferating cells, at early stages of leaves development. As to expression, expressed in roots, cotyledons and leaves, especially in vascular tissues, and in flowers.

It localises to the nucleus. Functionally, transcription factor that binds 5'-AACGG-3' motifs in gene promoters. Involved in the regulation of cytokinesis, probably via the activation of several G2/M phase-specific genes transcription (e.g. KNOLLE). Required for the maintenance of diploidy. Its function is as follows. Involved in transcription regulation during induced endoreduplication at the powdery mildew (e.g. G.orontii) infection site, thus promoting G.orontii growth and reproduction. The chain is Transcription factor MYB3R-4 from Arabidopsis thaliana (Mouse-ear cress).